The sequence spans 489 residues: Adenylosuccinate synthetase 2, chloroplastic (489 aa).

The transit peptide at 1 to 45 directs the protein to the chloroplast; sequence MPFSPPCLDPAAAAAASLSFLPAAAARPPAPCAVAPRSRRALRVA. GTP-binding positions include 76–82 and 104–106; these read GDEGKGK and GHT. Residue aspartate 77 is the Proton acceptor of the active site. Residues aspartate 77 and glycine 104 each contribute to the Mg(2+) site. IMP contacts are provided by residues 77-80, 102-105, threonine 194, arginine 208, glutamine 288, threonine 303, and arginine 367; these read DEGK and NAGH. The active-site Proton donor is histidine 105. 363–369 provides a ligand contact to substrate; that stretch reads TTTGRPR. Residues arginine 369, 395–397, and 478–480 each bind GTP; these read KLD and GVG.

Belongs to the adenylosuccinate synthetase family. As to quaternary structure, homodimer. Mg(2+) is required as a cofactor.

The protein resides in the plastid. It localises to the chloroplast. It carries out the reaction IMP + L-aspartate + GTP = N(6)-(1,2-dicarboxyethyl)-AMP + GDP + phosphate + 2 H(+). Its pathway is purine metabolism; AMP biosynthesis via de novo pathway; AMP from IMP: step 1/2. In terms of biological role, plays an important role in the de novo pathway and in the salvage pathway of purine nucleotide biosynthesis. Catalyzes the first committed step in the biosynthesis of AMP from IMP. This Oryza sativa subsp. japonica (Rice) protein is Adenylosuccinate synthetase 2, chloroplastic.